Reading from the N-terminus, the 431-residue chain is Serine hydroxymethyltransferase 2 (431 aa).

Residues Leu-131 and 135 to 137 (GHL) each bind (6S)-5,6,7,8-tetrahydrofolate. Residue Lys-240 is modified to N6-(pyridoxal phosphate)lysine. (6S)-5,6,7,8-tetrahydrofolate is bound at residue Glu-256.

Belongs to the SHMT family. As to quaternary structure, homodimer. Pyridoxal 5'-phosphate is required as a cofactor.

The protein resides in the cytoplasm. The catalysed reaction is (6R)-5,10-methylene-5,6,7,8-tetrahydrofolate + glycine + H2O = (6S)-5,6,7,8-tetrahydrofolate + L-serine. The protein operates within one-carbon metabolism; tetrahydrofolate interconversion. Its pathway is amino-acid biosynthesis; glycine biosynthesis; glycine from L-serine: step 1/1. In terms of biological role, catalyzes the reversible interconversion of serine and glycine with tetrahydrofolate (THF) serving as the one-carbon carrier. This reaction serves as the major source of one-carbon groups required for the biosynthesis of purines, thymidylate, methionine, and other important biomolecules. Also exhibits THF-independent aldolase activity toward beta-hydroxyamino acids, producing glycine and aldehydes, via a retro-aldol mechanism. In Vibrio vulnificus (strain YJ016), this protein is Serine hydroxymethyltransferase 2.